The primary structure comprises 63 residues: MARYRRHSRSRSRSRYRRRRRRRSRHHNRRRTYRRSRRHSIRRRGRRRGYSRRRYSRRGRRRY.

A disordered region spans residues 1–63 (MARYRRHSRS…RYSRRGRRRY (63 aa)).

Belongs to the protamine P1 family. As to expression, testis.

The protein resides in the nucleus. The protein localises to the chromosome. In terms of biological role, protamines substitute for histones in the chromatin of sperm during the haploid phase of spermatogenesis. They compact sperm DNA into a highly condensed, stable and inactive complex. This is Sperm protamine P1 (PRM1) from Sminthopsis bindi (Kakadu dunnart).